A 1388-amino-acid chain; its full sequence is Collagen alpha-1(XV) chain (1388 aa).

Positions 1 to 27 are cleaved as a signal peptide; the sequence is MAPRRNNGQCWCLLMLLSVSTPLPAVT. Positions 66-249 constitute a Laminin G-like domain; sequence AYSFGPGANV…SSASGETSGL (184 aa). The tract at residues 223 to 250 is disordered; that stretch reads TVHPDPRTPEELCDPEESSASGETSGLQ. Residues 229–555 are nonhelical region 1 (NC1); the sequence is RTPEELCDPE…WITPAQREHV (327 aa). The segment covering 240 to 249 has biased composition (polar residues); the sequence is SSASGETSGL. 2 O-linked (Xyl...) (chondroitin sulfate) serine glycosylation sites follow: serine 243 and serine 247. O-linked (GalNAc...) threonine glycosylation is present at threonine 265. Residues 266–301 form a disordered region; it reads QASPKEAKVEPINTPPTPSSPFEDMELSGEPVPEGT. N-linked (GlcNAc...) asparagine glycosylation is found at asparagine 306 and asparagine 324. Residue serine 343 is glycosylated (O-linked (Xyl...) (chondroitin sulfate) serine). 4 tandem repeats follow at residues 358–408, 409–459, 460–509, and 510–555. The 4 X tandem repeats stretch occupies residues 358 to 555; sequence AATAAGLAEV…WITPAQREHV (198 aa). Residues 371–795 are disordered; the sequence is TAGEAEASSV…VGPPGPRGPP (425 aa). The span at 379–392 shows a compositional bias: polar residues; it reads SVPTGGPTLSMSTE. Residues 409–420 show a composition bias toward low complexity; that stretch reads AATAAGEAEALA. Positions 452 to 472 are enriched in polar residues; it reads GPSSEDSLTTAAAATEVSLST. Residues 510–527 are compositionally biased toward low complexity; that stretch reads AAATTEEPLITAGGEESG. Positions 528-540 are enriched in pro residues; the sequence is SPPPDGPPLPLPT. Residues 556–573 form a triple-helical region 1 (COL1) region; sequence GMKGQAGPKGEKGDAGEE. A nonhelical region 2 (NC2) region spans residues 574–618; that stretch reads LPGPPEPSGPVGPTAGAEAEGSGLGWGSDVGSGSGDLVGSEQLLR. The span at 595 to 609 shows a compositional bias: gly residues; sequence SGLGWGSDVGSGSGD. Collagen-like domains are found at residues 619–680 and 681–731; these read GPPG…MKGE and KGAR…PPGP. The tract at residues 619-732 is triple-helical region 2 (COL2); the sequence is GPPGPPGPPG…PGPPGPPGPG (114 aa). Positions 620–630 are enriched in pro residues; that stretch reads PPGPPGPPGLP. Asparagine 687 is a glycosylation site (N-linked (GlcNAc...) asparagine). Pro residues predominate over residues 716 to 731; it reads VMGPPGPPGPPGPPGP. The interval 733–763 is nonhelical region 3 (NC3); it reads CTMGLGFEDTEGSGSTQLLNEPKLSRPTAAI. O-linked (Xyl...) (chondroitin sulfate) serine glycosylation is present at serine 745. Residues 764–798 form a triple-helical region 3 (COL3) region; sequence GLKGEKGDRGPKGERGMDGASIVGPPGPRGPPGHI. Positions 766 to 780 are enriched in basic and acidic residues; the sequence is KGEKGDRGPKGERGM. Residues 799-822 form a nonhelical region 4 (NC4) region; the sequence is KVLSNSLINITHGFMNFSDIPELV. Residues asparagine 807 and asparagine 814 are each glycosylated (N-linked (GlcNAc...) asparagine). One can recognise a Collagen-like 3 domain in the interval 823–865; it reads GPPGPDGLPGLPGFPGPRGPKGDTGLPGFPGLKGEQGEKGEPG. The segment at 823–867 is triple-helical region 4 (COL4); sequence GPPGPDGLPGLPGFPGPRGPKGDTGLPGFPGLKGEQGEKGEPGAI. The segment covering 827 to 840 has biased composition (pro residues); the sequence is PDGLPGLPGFPGPR. The tract at residues 827–864 is disordered; it reads PDGLPGLPGFPGPRGPKGDTGLPGFPGLKGEQGEKGEP. The tract at residues 868-878 is nonhelical region 5 (NC5); it reads LTEDIPLERLM. The region spanning 879 to 927 is the Collagen-like 4 domain; the sequence is GKKGEPGMHGAPGPMGPKGPPGHKGEFGLPGRPGRPGLNGLKGTKGDPG. Positions 879 to 949 are triple-helical region 5 (COL5); that stretch reads GKKGEPGMHG…PGPPGPPGAV (71 aa). The tract at residues 950-983 is nonhelical region 6 (NC6); the sequence is INIKGAIFPIPVRPHCKMPVDTAHPGSPELITFH. Residues 984–1013 are triple-helical region 6 (COL6); sequence GVKGEKGSWGLPGSKGEKGDQGAQGPPGPP. Disordered regions lie at residues 988-1016 and 1029-1133; these read EKGS…PLDL and ENGD…GSRN. Residues 1014 to 1027 form a nonhelical region 7 (NC7) region; sequence LDLAYLRHFLNNLK. Positions 1028-1045 are triple-helical region 7 (COL7); that stretch reads GENGDKGFKGEKGEKGDI. A compositionally biased stretch (basic and acidic residues) spans 1029-1044; the sequence is ENGDKGFKGEKGEKGD. N-linked (GlcNAc...) asparagine glycosylation is present at asparagine 1046. Positions 1046–1052 are nonhelical region 8 (NC8); the sequence is NGSFLMS. Residues 1053–1107 form a triple-helical region 8 (COL8) region; sequence GPPGLPGNPGPAGQKGETVVGPQGPPGAPGLPGPPGFGRPGDPGPPGPPGPPGPP. Pro residues-rich tracts occupy residues 1075 to 1107 and 1117 to 1126; these read QGPP…PGPP and PGPPGPPGQP. A nonhelical region 9 (NC9) region spans residues 1108–1117; sequence AILGAAVALP. The triple-helical region 9 (COL9) stretch occupies residues 1118–1132; sequence GPPGPPGQPGLPGSR. Residues 1133-1388 form a nonhelical region 10 (NC10) region; sequence NLVTAFSNMD…ENSFMTDARK (256 aa). 2 disulfide bridges follow: cysteine 1237–cysteine 1377 and cysteine 1339–cysteine 1369.

Belongs to the multiplexin collagen family. Trimer; disulfide-linked. As to quaternary structure, interacts moderately with EFEMP2. In terms of processing, prolines at the third position of the tripeptide repeating unit (G-X-Y) are hydroxylated in some or all of the chains. Post-translationally, O-glycosylated; with core 1 or possibly core 8 glycans. Contains chondroitin sulfate. As to expression, detected in fibroblasts and urine (at protein level). Detected in placenta (at protein level). Expressed predominantly in internal organs such as adrenal gland, pancreas and kidney.

It is found in the secreted. Its subcellular location is the extracellular space. The protein resides in the extracellular matrix. Structural protein that stabilizes microvessels and muscle cells, both in heart and in skeletal muscle. Its function is as follows. Restin potently inhibits angiogenesis. This chain is Collagen alpha-1(XV) chain (COL15A1), found in Homo sapiens (Human).